Consider the following 159-residue polypeptide: Vesicle transport protein SFT2A (159 aa).

Residues 1-36 are Cytoplasmic-facing; the sequence is MEKLRRVLSGQDDEEQGLTAQVLDASSLSFNTRLKW. The residue at position 9 (Ser-9) is a Phosphoserine. Residues 37 to 57 traverse the membrane as a helical segment; that stretch reads FAICFVCGVFFSILGTGLLWL. Topologically, residues 58 to 62 are lumenal; that stretch reads PGGIK. A helical transmembrane segment spans residues 63–83; the sequence is LFAVFYTLGNLAALASTCFLM. Topologically, residues 84 to 97 are cytoplasmic; the sequence is GPVKQLKKMFEATR. A helical transmembrane segment spans residues 98–118; sequence LLATIVMLLCFIFTLCAALWW. Over 119-122 the chain is Lumenal; that stretch reads HKKG. Residues 123–143 traverse the membrane as a helical segment; the sequence is LAVLFCILQFLSMTWYSLSYI. Residues 144 to 159 are Cytoplasmic-facing; that stretch reads PYARDAVIKCCSSLLS.

The protein belongs to the SFT2 family.

Its subcellular location is the membrane. In terms of biological role, may be involved in fusion of retrograde transport vesicles derived from an endocytic compartment with the Golgi complex. The chain is Vesicle transport protein SFT2A from Homo sapiens (Human).